The sequence spans 469 residues: Beta-1,3-xylanase (469 aa).

The first 22 residues, 1–22, serve as a signal peptide directing secretion; it reads MKKLAKMISIATLGACAFSAHA. The region spanning 23 to 293 is the GH26 domain; it reads LDGKLVPNEG…LKGFTYINAD (271 aa). Catalysis depends on Glu-138, which acts as the Proton donor. Glu-234 functions as the Nucleophile in the catalytic mechanism. Gly residues predominate over residues 352 to 374; it reads DNGGDNGGDNGGDNGGDNGGDNG. A disordered region spans residues 352–380; the sequence is DNGGDNGGDNGGDNGGDNGGDNGGTEPPE. Residues 377–469 are carbohydrate binding module (CBM); sequence EPPENCQDDF…NITFTTQVCN (93 aa). Intrachain disulfides connect Cys-382-Cys-468 and Cys-413-Cys-418.

This sequence belongs to the glycosyl hydrolase 26 family.

It carries out the reaction Random hydrolysis of (1-&gt;3)-beta-D-glycosidic linkages in (1-&gt;3)-beta-D-xylans.. Its activity is regulated as follows. Completely inhibited by CuCl(2), FeCl(3), HgCl(2) and N-bromosuccinimide. Moderately inhibited by AgCl, AlCl(3), Pb(CH(3)COO)(2) and dithiothreitol. BaCl(2), CaCl(2), KCl, MgCl(2), MnCl(2), NaCl, ZnCl(2), ethylenediaminetetraacetic acid, N-ethylmaleimide, iodoacetic acid and p-chloromercuribenzoic acid have little or no effect on activity. In terms of biological role, catalyzes the hydrolysis of beta-1,3-xylan into oligosaccharides, mainly xylotriose and xylobiose with smaller amounts of xylotetraose, xylose, xylopentaose and xylohexaose. Does not hydrolyze xylobiose, p-nitrophenyl-beta-xyloside, beta-1,4-xylan, carboxymethylcellulose, curdlan, glucomannan or beta-1,4-mannan. The chain is Beta-1,3-xylanase from Alcaligenes sp.